The primary structure comprises 291 residues: Heterogeneous nuclear ribonucleoprotein D-like-B (291 aa).

RRM domains lie at 34-116 (SKMF…QGKE) and 119-196 (KKVF…AAQP). A disordered region spans residues 196–226 (PKEVYRQQQQKQQKGGRGGTRGRGRGQGYSN). The span at 210–222 (GGRGGTRGRGRGQ) shows a compositional bias: gly residues.

The protein localises to the nucleus. The protein resides in the cytoplasm. Acts as a transcriptional regulator. Binds DNA and RNA. The polypeptide is Heterogeneous nuclear ribonucleoprotein D-like-B (hnrnpdl-b) (Xenopus laevis (African clawed frog)).